The chain runs to 457 residues: Multidrug resistance protein MdtK (457 aa).

Over 1–10 the chain is Cytoplasmic; sequence MQKYISEARL. A helical membrane pass occupies residues 11–31; the sequence is LLALAIPVILAQIAQTAMGFV. At 32–52 the chain is on the periplasmic side; that stretch reads DTVMAGGYSATDMAAVAIGTS. Residues 53 to 73 form a helical membrane-spanning segment; sequence IWLPAILFGHGLLLALTPVIA. The Cytoplasmic segment spans residues 74 to 92; that stretch reads QLNGSGRRERIAHQVRQGF. Residues 93–113 traverse the membrane as a helical segment; the sequence is WLAGFVSVLIMLVLWNAGYII. Residues 114 to 126 lie on the Periplasmic side of the membrane; it reads RSMENIDPALADK. The helical transmembrane segment at 127 to 147 threads the bilayer; the sequence is AVGYLRALLWGAPGYLFFQVA. Topologically, residues 148 to 159 are cytoplasmic; it reads RNQCEGLAKTKP. The chain crosses the membrane as a helical span at residues 160 to 180; that stretch reads GMVMGFIGLLVNIPVNYIFIY. Over 181 to 188 the chain is Periplasmic; sequence GHFGMPEL. A helical membrane pass occupies residues 189–209; that stretch reads GGVGCGVATAAVYWVMFLAMV. The Cytoplasmic segment spans residues 210 to 242; it reads SYIKRARSMRDIRNEKGTAKPDPAVMKRLIQLG. Residues 243–263 form a helical membrane-spanning segment; the sequence is LPIALALFFEVTLFAVVALLV. Topologically, residues 264-275 are periplasmic; sequence SPLGIVDVAGHQ. A helical membrane pass occupies residues 276 to 296; sequence IALNFSSLMFVLPMSLAAAVT. Residues 297 to 313 are Cytoplasmic-facing; it reads IRVGYRLGQGSTLDAQT. A helical transmembrane segment spans residues 314-334; sequence AARTGLMVGVCMATLTAIFTV. At 335–349 the chain is on the periplasmic side; that stretch reads SLREQIALLYNDNPE. Residues 350–370 form a helical membrane-spanning segment; the sequence is VVTLAAHLMLLAAVYQISDSI. Topologically, residues 371-386 are cytoplasmic; that stretch reads QVIGSGILRGYKDTRS. The chain crosses the membrane as a helical span at residues 387–407; that stretch reads IFYITFTAYWVLGLPSGYILA. Topologically, residues 408-417 are periplasmic; sequence LTDLVVEPMG. The chain crosses the membrane as a helical span at residues 418-438; it reads PAGFWIGFIIGLTSAAIMMML. At 439 to 457 the chain is on the cytoplasmic side; the sequence is RMRFLQRMPSAIILQRASR.

It belongs to the multi antimicrobial extrusion (MATE) (TC 2.A.66.1) family. MdtK subfamily.

The protein localises to the cell inner membrane. In terms of biological role, multidrug efflux pump that functions probably as a Na(+)/drug antiporter. The protein is Multidrug resistance protein MdtK of Shigella boydii serotype 4 (strain Sb227).